The sequence spans 361 residues: Peptide chain release factor 1 (361 aa).

Glutamine 235 is modified (N5-methylglutamine).

Belongs to the prokaryotic/mitochondrial release factor family. Post-translationally, methylated by PrmC. Methylation increases the termination efficiency of RF1.

It localises to the cytoplasm. Its function is as follows. Peptide chain release factor 1 directs the termination of translation in response to the peptide chain termination codons UAG and UAA. The protein is Peptide chain release factor 1 of Buchnera aphidicola subsp. Schizaphis graminum (strain Sg).